We begin with the raw amino-acid sequence, 728 residues long: Lanosterol synthase (728 aa).

Residues 117–159 (RVEMIRYIVNTAHPVDGGWGLHSVDKSTCFGTTMNYVCLRLLG) form a PFTB 1 repeat. D450 (proton donor) is an active-site residue. 2 PFTB repeats span residues 561–602 (ISSA…HTVG) and 611–657 (VKKG…ALIG).

Belongs to the terpene cyclase/mutase family.

The protein resides in the lipid droplet. It is found in the endoplasmic reticulum membrane. The enzyme catalyses (S)-2,3-epoxysqualene = lanosterol. It functions in the pathway terpene metabolism; lanosterol biosynthesis; lanosterol from farnesyl diphosphate: step 3/3. Its function is as follows. Lanosterol synthase; part of the third module of ergosterol biosynthesis pathway that includes the late steps of the pathway. ERG7 catalyzes the cyclization of (S)-2,3 oxidosqualene to lanosterol, a reaction that forms the sterol core. The third module or late pathway involves the ergosterol synthesis itself through consecutive reactions that mainly occur in the endoplasmic reticulum (ER) membrane. Firstly, the squalene synthase ERG9 catalyzes the condensation of 2 farnesyl pyrophosphate moieties to form squalene, which is the precursor of all steroids. Squalene synthase is crucial for balancing the incorporation of farnesyl diphosphate (FPP) into sterol and nonsterol isoprene synthesis. Secondly, the squalene epoxidase ERG1 catalyzes the stereospecific oxidation of squalene to (S)-2,3-epoxysqualene, which is considered to be a rate-limiting enzyme in steroid biosynthesis. Then, the lanosterol synthase ERG7 catalyzes the cyclization of (S)-2,3 oxidosqualene to lanosterol, a reaction that forms the sterol core. In the next steps, lanosterol is transformed to zymosterol through a complex process involving various demethylation, reduction and desaturation reactions. The lanosterol 14-alpha-demethylase ERG11 (also known as CYP51) catalyzes C14-demethylation of lanosterol to produce 4,4'-dimethyl cholesta-8,14,24-triene-3-beta-ol, which is critical for ergosterol biosynthesis. The C-14 reductase ERG24 reduces the C14=C15 double bond of 4,4-dimethyl-cholesta-8,14,24-trienol to produce 4,4-dimethyl-cholesta-8,24-dienol. 4,4-dimethyl-cholesta-8,24-dienol is substrate of the C-4 demethylation complex ERG25-ERG26-ERG27 in which ERG25 catalyzes the three-step monooxygenation required for the demethylation of 4,4-dimethyl and 4alpha-methylsterols, ERG26 catalyzes the oxidative decarboxylation that results in a reduction of the 3-beta-hydroxy group at the C-3 carbon to an oxo group, and ERG27 is responsible for the reduction of the keto group on the C-3. ERG28 has a role as a scaffold to help anchor ERG25, ERG26 and ERG27 to the endoplasmic reticulum and ERG29 regulates the activity of the iron-containing C4-methylsterol oxidase ERG25. Then, the sterol 24-C-methyltransferase ERG6 catalyzes the methyl transfer from S-adenosyl-methionine to the C-24 of zymosterol to form fecosterol. The C-8 sterol isomerase ERG2 catalyzes the reaction which results in unsaturation at C-7 in the B ring of sterols and thus converts fecosterol to episterol. The sterol-C5-desaturase ERG3 then catalyzes the introduction of a C-5 double bond in the B ring to produce 5-dehydroepisterol. The C-22 sterol desaturase ERG5 further converts 5-dehydroepisterol into ergosta-5,7,22,24(28)-tetraen-3beta-ol by forming the C-22(23) double bond in the sterol side chain. Finally, ergosta-5,7,22,24(28)-tetraen-3beta-ol is substrate of the C-24(28) sterol reductase ERG4 to produce ergosterol. This Candida albicans (strain SC5314 / ATCC MYA-2876) (Yeast) protein is Lanosterol synthase.